Consider the following 282-residue polypeptide: MSEYISLEQYNTYRIKSFAKYVYFPTNNQELLDIVNNHNKLFFLGNGSNVIFSKEYYDDVAFVIFTKKFNSFNIIDNYASVQAGVLLQDLAFATYNASLSGIETFYDVPASVGGALIMNAGAYGDEIYTCVKSVTILDLNTKQIKKYLKKDIEYGYRYSIFKYMKDICILSAEFEFEYKSKQEIKAKLDDIYSRRLSNLPQKPTAGSVFKRPQANMPVGIMVEQLGLKGKQIGDAQISPKHGGIIVNNGNATGQNILDLIEFIKQQILEHYNIELHEEQIVI.

Positions 15-179 (IKSFAKYVYF…LSAEFEFEYK (165 aa)) constitute an FAD-binding PCMH-type domain. Arg157 is an active-site residue. Ser207 acts as the Proton donor in catalysis. Residue Glu278 is part of the active site.

This sequence belongs to the MurB family. It depends on FAD as a cofactor.

It is found in the cytoplasm. The catalysed reaction is UDP-N-acetyl-alpha-D-muramate + NADP(+) = UDP-N-acetyl-3-O-(1-carboxyvinyl)-alpha-D-glucosamine + NADPH + H(+). Its pathway is cell wall biogenesis; peptidoglycan biosynthesis. Its function is as follows. Cell wall formation. The polypeptide is UDP-N-acetylenolpyruvoylglucosamine reductase (Francisella tularensis subsp. tularensis (strain SCHU S4 / Schu 4)).